The primary structure comprises 172 residues: Acetolactate synthase small subunit (172 aa).

The ACT domain maps to 4–78; that stretch reads TLSVLVEDEA…NVIKVQDITE (75 aa).

Belongs to the acetolactate synthase small subunit family. As to quaternary structure, dimer of large and small chains.

The catalysed reaction is 2 pyruvate + H(+) = (2S)-2-acetolactate + CO2. It functions in the pathway amino-acid biosynthesis; L-isoleucine biosynthesis; L-isoleucine from 2-oxobutanoate: step 1/4. Its pathway is amino-acid biosynthesis; L-valine biosynthesis; L-valine from pyruvate: step 1/4. The sequence is that of Acetolactate synthase small subunit (ilvH) from Synechocystis sp. (strain ATCC 27184 / PCC 6803 / Kazusa).